The chain runs to 274 residues: 2,3,4,5-tetrahydropyridine-2,6-dicarboxylate N-succinyltransferase (274 aa).

Residues R106 and D143 each contribute to the substrate site.

It belongs to the transferase hexapeptide repeat family. As to quaternary structure, homotrimer.

The protein localises to the cytoplasm. The catalysed reaction is (S)-2,3,4,5-tetrahydrodipicolinate + succinyl-CoA + H2O = (S)-2-succinylamino-6-oxoheptanedioate + CoA. It functions in the pathway amino-acid biosynthesis; L-lysine biosynthesis via DAP pathway; LL-2,6-diaminopimelate from (S)-tetrahydrodipicolinate (succinylase route): step 1/3. This chain is 2,3,4,5-tetrahydropyridine-2,6-dicarboxylate N-succinyltransferase, found in Cupriavidus metallidurans (strain ATCC 43123 / DSM 2839 / NBRC 102507 / CH34) (Ralstonia metallidurans).